We begin with the raw amino-acid sequence, 391 residues long: Lysophosphatidylinositol acyltransferase 10 (391 aa).

5 helical membrane-spanning segments follow: residues 10–30 (LLGWFFGLCILFSALFGNYII), 52–72 (AISYWMTIPMGLLEFLMGVRI), 97–119 (WMYMWCALYQINPWLITSNKISL), 323–343 (LTSLMFWTLVISFCSYHIFFV), and 347–367 (QLGFLYFFVISFYLSWRYGGI).

Belongs to the 1-acyl-sn-glycerol-3-phosphate acyltransferase family. Expressed in seam cells, vulval epithelial cells and the major epithelial syncytium hyp7, and in several head neurons including AIY interneurons.

Its subcellular location is the endoplasmic reticulum membrane. The catalysed reaction is a 2-acyl-sn-glycero-3-phospho-D-myo-inositol + an acyl-CoA = a 1,2-diacyl-sn-glycero-3-phospho-(1D-myo-inositol) + CoA. The enzyme catalyses a 2-acyl-sn-glycero-3-phospho-D-myo-inositol + octadecanoyl-CoA = 1-octadecanoyl-2-acyl-sn-glycero-3-phospho-1D-myo-inositol + CoA. It participates in phospholipid metabolism; phosphatidylinositol metabolism. Functionally, acyltransferase required for the fatty acid remodeling of phosphatidylinositol (1,2-diacyl-sn-glycero-3-phosphoinositol or PI). Mediates the conversion of lysophosphatidylinositol (2-acylglycerophosphatidylinositol or LPI) into PI (LPIAT activity). Has preference for saturated and mono-unsaturated fatty acids as acyl donors and sn-2-acyl lysoPI (2-acyl-sn-glycero-3-phospho-D-myo-inositol) as acyl acceptor. Contributes to the asymmetric cell division of epithelial cells. Asymmetric cell division is the fundamental mechanism by which multicellular organisms generate cell diversity. This Caenorhabditis elegans protein is Lysophosphatidylinositol acyltransferase 10.